The chain runs to 418 residues: D-amino acid dehydrogenase (418 aa).

3–17 (VLVLGAGVAGVSSAW) provides a ligand contact to FAD.

This sequence belongs to the DadA oxidoreductase family. It depends on FAD as a cofactor.

It carries out the reaction a D-alpha-amino acid + A + H2O = a 2-oxocarboxylate + AH2 + NH4(+). The protein operates within amino-acid degradation; D-alanine degradation; NH(3) and pyruvate from D-alanine: step 1/1. Oxidative deamination of D-amino acids. This Neisseria meningitidis serogroup C (strain 053442) protein is D-amino acid dehydrogenase.